We begin with the raw amino-acid sequence, 318 residues long: Ubiquitin-conjugating enzyme E2 J1 (318 aa).

Residues methionine 1–threonine 282 are Cytoplasmic-facing. The UBC core domain occupies proline 10–leucine 160. Residue cysteine 91 is the Glycyl thioester intermediate of the active site. Serine 184 is modified (phosphoserine; by MAPKAPK2). Over residues leucine 229–threonine 248 the composition is skewed to polar residues. Residues leucine 229–aspartate 283 form a disordered region. The span at serine 249–serine 268 shows a compositional bias: low complexity. 2 positions are modified to phosphoserine: serine 266 and serine 268. Residues aspartate 283–phenylalanine 303 traverse the membrane as a helical; Anchor for type IV membrane protein segment. At arginine 304–leucine 318 the chain is on the lumenal side.

This sequence belongs to the ubiquitin-conjugating enzyme family. In terms of assembly, component of the HRD1 complex, which comprises at least SYNV1/HRD1, DERL1/2, FAM8A1, HERPUD1/HERP, OS9, SEL1L and UBE2J1. Interacts with E3 ligase RNF26. Interacts with E3 ligase RNF133. Phosphorylated at Ser-184 in a cytosolic stress-dependent manner by MAP kinase p38 MAPKAPK2. Post-translationally, phosphorylated UBE2J1 is rapidly ubiquitinated and subsequently degraded by the proteasome. In terms of tissue distribution, expressed in testes.

The protein localises to the endoplasmic reticulum membrane. The enzyme catalyses S-ubiquitinyl-[E1 ubiquitin-activating enzyme]-L-cysteine + [E2 ubiquitin-conjugating enzyme]-L-cysteine = [E1 ubiquitin-activating enzyme]-L-cysteine + S-ubiquitinyl-[E2 ubiquitin-conjugating enzyme]-L-cysteine.. It participates in protein modification; protein ubiquitination. Its function is as follows. Catalyzes the covalent attachment of ubiquitin to other proteins. Functions in the selective degradation of misfolded membrane proteins from the endoplasmic reticulum (ERAD) and is essential for cells to recover from ER stress. Plays a role in MAPKAPK2-dependent translational control of TNF-alpha synthesis. Also acts as a platform for perinuclear positioning of the endosomal system by mediating ubiquitination of SQSTM1 through interaction with the E3 ubiquitin-protein ligase RNF26. Plays a role in male fecundity through the interaction with the E3 ubiquitin-protein ligase RNF133. (Microbial infection) Promotes Dengue virus RNA replication by negatively regulating IFN-beta signaling and mediating 'Lys-48'-linked ubiquitination on IRF3. In Homo sapiens (Human), this protein is Ubiquitin-conjugating enzyme E2 J1.